The chain runs to 162 residues: MGLEKEKLECSIIMDEDEFNRSIEPILSKKARLYSSAPDRDPHDINAQLKVGFEDVIAEPASAHSFDRVWIGSSATFELVKFIFYRLLTTLLAVPAAFILGVVFGVLSCIHIWLVMPVTRSFLMLLPSIQVVWKSVTDMFITPLFHSMGRSLSSIQVRTSDT.

The Cytoplasmic portion of the chain corresponds to 1 to 86 (MGLEKEKLEC…FELVKFIFYR (86 aa)). Residues 87–107 (LLTTLLAVPAAFILGVVFGVL) constitute an intramembrane region (helical). Topologically, residues 108-162 (SCIHIWLVMPVTRSFLMLLPSIQVVWKSVTDMFITPLFHSMGRSLSSIQVRTSDT) are cytoplasmic.

This sequence belongs to the caveolin family. Homooligomer.

The protein localises to the golgi apparatus membrane. It is found in the cell membrane. Its subcellular location is the membrane. It localises to the caveola. Its function is as follows. May act as a scaffolding protein within caveolar membranes. Interacts directly with G-protein alpha subunits and can functionally regulate their activity. The protein is Caveolin-2 (cav2) of Takifugu rubripes (Japanese pufferfish).